We begin with the raw amino-acid sequence, 584 residues long: uncharacterized protein (584 aa).

The chain crosses the membrane as a helical span at residues F15–L35. Polar residues-rich tracts occupy residues D184 to N194 and G204 to I225. Residues D184 to S226 are disordered. Coiled-coil stretches lie at residues D267–P319 and R436–R477.

The protein resides in the membrane. This is an uncharacterized protein from Plasmodium falciparum (isolate 3D7).